A 166-amino-acid polypeptide reads, in one-letter code: Phosphopantetheine adenylyltransferase (166 aa).

Residue Ser9 coordinates substrate. ATP is bound by residues 9-10 and His17; that span reads SY. Positions 41, 75, and 89 each coordinate substrate. Residues 90–92, Glu100, and 124–130 each bind ATP; these read GLR and LEHISSS.

Belongs to the bacterial CoaD family. In terms of assembly, homohexamer. Mg(2+) serves as cofactor.

The protein localises to the cytoplasm. The catalysed reaction is (R)-4'-phosphopantetheine + ATP + H(+) = 3'-dephospho-CoA + diphosphate. Its pathway is cofactor biosynthesis; coenzyme A biosynthesis; CoA from (R)-pantothenate: step 4/5. Functionally, reversibly transfers an adenylyl group from ATP to 4'-phosphopantetheine, yielding dephospho-CoA (dPCoA) and pyrophosphate. This chain is Phosphopantetheine adenylyltransferase, found in Bifidobacterium longum (strain DJO10A).